The sequence spans 547 residues: Glucose-6-phosphate isomerase 2 (547 aa).

Residue glutamate 351 is the Proton donor of the active site. Active-site residues include histidine 382 and lysine 508.

Belongs to the GPI family.

The protein resides in the cytoplasm. The enzyme catalyses alpha-D-glucose 6-phosphate = beta-D-fructose 6-phosphate. Its pathway is carbohydrate biosynthesis; gluconeogenesis. It functions in the pathway carbohydrate degradation; glycolysis; D-glyceraldehyde 3-phosphate and glycerone phosphate from D-glucose: step 2/4. In terms of biological role, catalyzes the reversible isomerization of glucose-6-phosphate to fructose-6-phosphate. The chain is Glucose-6-phosphate isomerase 2 from Neisseria gonorrhoeae (strain ATCC 700825 / FA 1090).